Reading from the N-terminus, the 522-residue chain is F-box only protein 7 (522 aa).

Disordered stretches follow at residues 1-20 (MKLRVRLQKRTQPLEVPESE) and 85-128 (PNLP…HGQV). The ubiquitin-like stretch occupies residues 1–88 (MKLRVRLQKR…EDEMPAPNLP (88 aa)). Residues 87-114 (LPSSTDSEHSSLQNNDQPPLAATSSQAN) are compositionally biased toward polar residues. The segment at 92-129 (DSEHSSLQNNDQPPLAATSSQANIPDEQGSDSSHGQVT) is important for interaction with PINK1. The tract at residues 129-169 (TQYDAWTDDSMEGPSHSAEAVSIQDAMSVEEASGFHPLEPM) is important for interaction with CDK6. The tract at residues 180 to 324 (PHSLEALYQS…PLLAFTRQVL (145 aa)) is important for dimerization and interaction with PSMF1. An F-box domain is found at 329 to 375 (VFGLVVLPLELKLRIFRLLDVHSVLALSAVCHDLLIASNDPLLWRCL). Residues 381–522 (RDSTIRGPDT…RSADNRLPYL (142 aa)) are important for interaction with CDK6. 2 positions are modified to omega-N-methylarginine: Arg431 and Arg451. A disordered region spans residues 459 to 522 (DPVTSLIPRP…RSADNRLPYL (64 aa)). The RFDP motif motif lies at 481–484 (RFDP). An Asymmetric dimethylarginine modification is found at Arg518.

In terms of assembly, part of the SCF (SKP1-CUL1-F-box) E3 ubiquitin-protein ligase complex SCF(FBXO7) formed of CUL1, SKP1, RBX1 and FBXO7. Interacts via its C-terminal proline-rich region with DLGAP5. Interacts with BIRC2. Interacts with CDK6 and promotes its interaction with D-type cyclin. Interacts (via the N-terminal Ubl domain) with PRKN. Interacts (via N-terminal region) with PINK1. Interacts with PSMF1.

Its subcellular location is the cytoplasm. It is found in the nucleus. The protein resides in the mitochondrion. The protein localises to the cytosol. The protein operates within protein modification; protein ubiquitination. Its function is as follows. Substrate recognition component of a SCF (SKP1-CUL1-F-box protein) E3 ubiquitin-protein ligase complex which mediates the ubiquitination and subsequent proteasomal degradation of target proteins and plays a role in several biological processes such as cell cycle, cell proliferation, or maintenance of chromosome stability. Recognizes and ubiquitinates BIRC2 and the cell cycle regulator DLGAP5. Plays a role downstream of PINK1 in the clearance of damaged mitochondria via selective autophagy (mitophagy) by targeting PRKN to dysfunctional depolarized mitochondria. Promotes MFN1 ubiquitination. Mediates the ubiquitination and proteasomal degradation of UXT isoform 2, thereby impairing the NF-kappa-B signaling pathway. Inhibits NF-kappa-B pathway also by promoting the ubiquitinatioin of TRAF2. Affects the assembly state and activity of the proteasome in the cells including neurons by ubiquitinating the proteasomal subunit PSMA2 via 'Lys-63'-linked polyubiquitin chains. Promotes 'Lys-48'-linked polyubiquitination SIRT7, leading to the hydrogen peroxide-induced cell death. This is F-box only protein 7 (Fbxo7) from Rattus norvegicus (Rat).